The primary structure comprises 768 residues: Pentatricopeptide repeat-containing protein At3g53360, mitochondrial (768 aa).

A mitochondrion-targeting transit peptide spans 1 to 70 (MATMLRLGAR…SSFKIRLRTY (70 aa)). 18 PPR repeats span residues 30–60 (TEEL…AQKN), 66–100 (RLRT…NCKY), 101–131 (DTIL…MPER), 132–166 (NLVS…DLVP), 167–201 (DQFA…ESSS), 202–232 (HLIA…IPMK), 233–267 (DLIS…GVFH), 269–303 (NEYI…ELAG), 304–334 (NAIA…IERP), 335–369 (DTAS…GFIP), 370–404 (DAIS…GFLA), 405–435 (DLTV…FRNN), 437–471 (DSVS…ECEP), 472–506 (DHIT…GLAP), 507–537 (EQFI…MDNR), 538–572 (DVVS…GIEP), 573–608 (NHVT…GISP), and 609–639 (TKEH…MKLE). Residues 644-719 (VWKTLLSACK…IPGQSWIEIE (76 aa)) form a type E motif region. A type E(+) motif region spans residues 720–750 (DKIHIFFAEDIFHPERDDIYTVLHNIWSQML).

The protein belongs to the PPR family. PCMP-E subfamily.

It localises to the mitochondrion. The sequence is that of Pentatricopeptide repeat-containing protein At3g53360, mitochondrial (PCMP-E86) from Arabidopsis thaliana (Mouse-ear cress).